Consider the following 585-residue polypeptide: Arginine--tRNA ligase (585 aa).

The 'HIGH' region motif lies at 131-141 (ANPTGPMHVGH).

This sequence belongs to the class-I aminoacyl-tRNA synthetase family. Monomer.

The protein resides in the cytoplasm. The enzyme catalyses tRNA(Arg) + L-arginine + ATP = L-arginyl-tRNA(Arg) + AMP + diphosphate. The chain is Arginine--tRNA ligase from Brucella canis (strain ATCC 23365 / NCTC 10854 / RM-666).